We begin with the raw amino-acid sequence, 319 residues long: Acetyl esterase (319 aa).

Residues 91–93 carry the Involved in the stabilization of the negatively charged intermediate by the formation of the oxyanion hole motif; that stretch reads HGG. Active-site residues include Ser-165, Asp-262, and His-292.

It belongs to the 'GDXG' lipolytic enzyme family. As to quaternary structure, homodimer. Interacts with MalT and MelA.

It is found in the cytoplasm. Displays esterase activity towards short chain fatty esters (acyl chain length of up to 8 carbons). Able to hydrolyze triacetylglycerol (triacetin) and tributyrylglycerol (tributyrin), but not trioleylglycerol (triolein) or cholesterol oleate. Negatively regulates MalT activity by antagonizing maltotriose binding. Inhibits MelA galactosidase activity. This Escherichia coli (strain 55989 / EAEC) protein is Acetyl esterase.